The sequence spans 347 residues: MLTNPSQVIIRNQDSLSQHKVLVLNHEADLLPKALLDVAASVDALALDYHHYLHLAPHANSKLRCYFGHDLPHQDPLEREKYDTVIVYFPKAKPLAPYLFNLAANHLVPNGQLLVVGENKGGIKSLVKLLPEYFATGMKLDNARHCLLFGSSLEGSAPAMKLSDWVSQYQLTTPQGEISICNLVGVFSEKRLDLGTELLLSHLPTLSGRVLDFGCGAGVIAAALLKAQPSLSLECVDINAMALASCELTLAANGMTAKVYPSDGLAQTTGKFNGIISNPPFHDGLASTTSIAQNFVTDSAKQLQHNGIWQIVANRHLPYSDIIAAEFGQLKVVADNNKYKLYYFQHK.

This sequence belongs to the methyltransferase superfamily. RsmC family. As to quaternary structure, monomer.

The protein resides in the cytoplasm. It catalyses the reaction guanosine(1207) in 16S rRNA + S-adenosyl-L-methionine = N(2)-methylguanosine(1207) in 16S rRNA + S-adenosyl-L-homocysteine + H(+). Functionally, specifically methylates the guanine in position 1207 of 16S rRNA in the 30S particle. In Shewanella baltica (strain OS185), this protein is Ribosomal RNA small subunit methyltransferase C.